The sequence spans 396 residues: MSGPQHITILGATGSIGLSTLDVVARHPTLYQVFALTGFSRLDELLALCIKHTPQYAVVPEQVAARKLQDDLAAAGLDTRVLVGEGGLCEVAAHPMVDAVMAAIVGAAGLRPTLAAVEAGKKVLLANKEALVMSGALFMQAVRQSGAVLLPIDSEHNAIFQCLPGDFARGLGAVGVRRIMLTASGGPFRETPLEQLQDVTPEQACAHPVWSMGRKISVDSATMMNKGLELIEACWLFDARPDQVEVVIHPQSVIHSLVDYVDGSVLAQLGNPDMRTPIANALAWPARVDSGVAPLDLFRIGQLDFQEPDEERFPCLRLARQAAEAGGSAPAMLNAANEVAVAAFLDGRIRYLEIAGIIEEVLNREPVTAVVGLDAVFAADAKARLLAGQWLERNER.

NADPH is bound by residues Thr-13, Gly-14, Ser-15, Ile-16, and Asn-127. Residue Lys-128 participates in 1-deoxy-D-xylulose 5-phosphate binding. Glu-129 lines the NADPH pocket. Asp-153 contributes to the Mn(2+) binding site. 1-deoxy-D-xylulose 5-phosphate is bound by residues Ser-154, Glu-155, Ser-184, and His-207. Glu-155 serves as a coordination point for Mn(2+). Position 213 (Gly-213) interacts with NADPH. The 1-deoxy-D-xylulose 5-phosphate site is built by Ser-220, Asn-225, Lys-226, and Glu-229. Glu-229 contributes to the Mn(2+) binding site.

It belongs to the DXR family. It depends on Mg(2+) as a cofactor. Mn(2+) is required as a cofactor.

It catalyses the reaction 2-C-methyl-D-erythritol 4-phosphate + NADP(+) = 1-deoxy-D-xylulose 5-phosphate + NADPH + H(+). The protein operates within isoprenoid biosynthesis; isopentenyl diphosphate biosynthesis via DXP pathway; isopentenyl diphosphate from 1-deoxy-D-xylulose 5-phosphate: step 1/6. In terms of biological role, catalyzes the NADPH-dependent rearrangement and reduction of 1-deoxy-D-xylulose-5-phosphate (DXP) to 2-C-methyl-D-erythritol 4-phosphate (MEP). The sequence is that of 1-deoxy-D-xylulose 5-phosphate reductoisomerase from Pseudomonas syringae pv. tomato (strain ATCC BAA-871 / DC3000).